Reading from the N-terminus, the 536-residue chain is MEVSVIGNPQARICRAELAYRELGFRFGSDVISGESRNRVSFCNQSSKWKEIAIRCSSRSVKCEAIVSDDASPFLKSTPKSKSLESVKLFVGLPLDTVSDCNNVNHLKAITAGLKALKLLGVEGIELPIFWGVVEKEAAGKYEWSGYLAVAEIVKKVGLKLHASLSFHGSKQTEIGLPDWVAKIGDAEPGIYFTDRYGQQYKDCLSFAVDDVPVLDGKTPMEVYRGFCESFKSAFADYMGNTITGITLGLGPDGELKYPSHQHNAKLSGAGEFQCYDKHMLSALKGYAESTGNPLWGLGGPHDAPAYDQQPNSSSFFSDGGSWESQYGDFFLSWYSSLLTSHADRVLSVASSAFSGIGVPLCGKLPLLHQWHKLRSHPSELTAGFYSSNGQDRYEAIAEIFAKNSCRMIIPGMDLSDEHQSPESLSSPESLLGHIKTSCKKQGVVVSGQNSSTPVPGGFERIVENLKDENVGIDLFTYQRMGALFFSPEHFHAFTVFVRNLSQFELSSDDQASEAEVEAETASIGSGTGAPSLQTA.

Serine 47 bears the Phosphoserine mark. A disordered region spans residues 511–536; the sequence is QASEAEVEAETASIGSGTGAPSLQTA.

Belongs to the glycosyl hydrolase 14 family. As to expression, mostly expressed in young floral buds, flowers and roots, and, to a later extent, in stems and leaves.

It is found in the cytoplasm. This chain is Inactive beta-amylase 9 (BAM9), found in Arabidopsis thaliana (Mouse-ear cress).